Reading from the N-terminus, the 161-residue chain is MRHNKKFNHLGRTASHRSAMLSNMACSLIKHKRITTTVAKAKALKKFVEPLITKSKEDTTNSRRVVFSNLQDKLAVTELFKEISVKIADRPGGYTRIIKTGNRLGDNAEMCFIELVDYNENMAKEKVAKKATRTRRSKKTTEAAPAAEVPATEEPKAESAE.

Positions 126–161 are disordered; the sequence is KVAKKATRTRRSKKTTEAAPAAEVPATEEPKAESAE. Positions 129–138 are enriched in basic residues; the sequence is KKATRTRRSK. A compositionally biased stretch (low complexity) spans 142 to 152; the sequence is EAAPAAEVPAT.

Belongs to the bacterial ribosomal protein bL17 family. In terms of assembly, part of the 50S ribosomal subunit. Contacts protein L32.

In Bacteroides fragilis (strain ATCC 25285 / DSM 2151 / CCUG 4856 / JCM 11019 / LMG 10263 / NCTC 9343 / Onslow / VPI 2553 / EN-2), this protein is Large ribosomal subunit protein bL17.